Reading from the N-terminus, the 163-residue chain is IQ domain-containing protein F2 (163 aa).

IQ domains follow at residues 42–71 (RVIA…STWI) and 98–127 (RERA…AIYV).

The protein is IQ domain-containing protein F2 (IQCF2) of Bos taurus (Bovine).